The following is a 373-amino-acid chain: Dual-specificity RNA methyltransferase RlmN (373 aa).

The active-site Proton acceptor is Glu-94. Positions 100–339 (EADRATLCVS…VIVRKTRGDD (240 aa)) constitute a Radical SAM core domain. Cysteines 107 and 344 form a disulfide. Cys-114, Cys-118, and Cys-121 together coordinate [4Fe-4S] cluster. Residues 168–169 (GE), Ser-200, 222–224 (SLH), and Asn-301 contribute to the S-adenosyl-L-methionine site. Cys-344 acts as the S-methylcysteine intermediate in catalysis.

The protein belongs to the radical SAM superfamily. RlmN family. [4Fe-4S] cluster is required as a cofactor.

The protein localises to the cytoplasm. It carries out the reaction adenosine(2503) in 23S rRNA + 2 reduced [2Fe-2S]-[ferredoxin] + 2 S-adenosyl-L-methionine = 2-methyladenosine(2503) in 23S rRNA + 5'-deoxyadenosine + L-methionine + 2 oxidized [2Fe-2S]-[ferredoxin] + S-adenosyl-L-homocysteine. The enzyme catalyses adenosine(37) in tRNA + 2 reduced [2Fe-2S]-[ferredoxin] + 2 S-adenosyl-L-methionine = 2-methyladenosine(37) in tRNA + 5'-deoxyadenosine + L-methionine + 2 oxidized [2Fe-2S]-[ferredoxin] + S-adenosyl-L-homocysteine. Functionally, specifically methylates position 2 of adenine 2503 in 23S rRNA and position 2 of adenine 37 in tRNAs. m2A2503 modification seems to play a crucial role in the proofreading step occurring at the peptidyl transferase center and thus would serve to optimize ribosomal fidelity. The polypeptide is Dual-specificity RNA methyltransferase RlmN (Tolumonas auensis (strain DSM 9187 / NBRC 110442 / TA 4)).